The sequence spans 348 residues: MDQMEVPDNDKNRKYPTKDLKIILPKTYADVNSKKGPEYWDYENITLKWNVPDSYEIVRKIGRGKFSEVFEGLNTVTKDKCVIKILKPVKKKKIKREIKILQNLRGGPNIIKLLDIVKDPQSRTPSLIFEHVNNTDFKTLYPTLTIQDIKYYIYQLLKAMNYCHSQGIMHRDIKPHNVMIDHEKKILRLIDWGLAEFYHPEQEYSVRVATRYYKGPELLVDMRYYDYSLDIWSIGCMLAGIIFKKEPFFYGHDNYDQLVKIAKVLGTEDLHRYFEKYGLKFAPAYQEILGNHSKKPWTKFVHHENQHLVSPEVMDLLDRMLVYDHTKRITPLEAMEHPFFNEIKNNSV.

Residues Tyr-55–Phe-340 enclose the Protein kinase domain. ATP-binding positions include Ile-61–Val-69 and Lys-84. Asp-172 acts as the Proton acceptor in catalysis.

This sequence belongs to the protein kinase superfamily. Ser/Thr protein kinase family. CK2 subfamily. As to quaternary structure, tetramer of two alpha and two beta chains.

It localises to the cytoplasm. The catalysed reaction is L-seryl-[protein] + ATP = O-phospho-L-seryl-[protein] + ADP + H(+). It carries out the reaction L-threonyl-[protein] + ATP = O-phospho-L-threonyl-[protein] + ADP + H(+). Its function is as follows. Casein kinases are operationally defined by their preferential utilization of acidic proteins such as caseins as substrates. The alpha chain contains the catalytic site. The polypeptide is Casein kinase II subunit alpha (Theileria annulata).